Reading from the N-terminus, the 140-residue chain is Neuropeptide CCHamide-2 (140 aa).

The N-terminal stretch at 1–22 (MAQMYLAVTIIALLAISHGVSA) is a signal peptide. Cys26 and Cys33 form a disulfide bridge. At His37 the chain carries Histidine amide. Residues 41–140 (SGDTSAMDQL…PDDGYYIESL (100 aa)) constitute a propeptide that is removed on maturation.

Expressed in corpora cardiaca (CC), corpora allata (CA), antennal lobe (AL) and gnathal ganglion (GNG) (at protein level). Expression detected in few animals (at protein level).

It is found in the secreted. Its function is as follows. Ligand for the CCHamide-2 receptor CCHa2-R. This is Neuropeptide CCHamide-2 from Agrotis ipsilon (Black cutworm moth).